Here is a 390-residue protein sequence, read N- to C-terminus: GTPase Obg (390 aa).

Residues 1 to 159 (MKFVDEATIL…RDLQLELMLL (159 aa)) form the Obg domain. Residues 127–146 (NTRFKSSVNRTPRQKTMGTP) are disordered. The segment covering 129 to 143 (RFKSSVNRTPRQKTM) has biased composition (polar residues). The 174-residue stretch at 160–333 (ADVGMLGMPN…LCWDVMHFII (174 aa)) folds into the OBG-type G domain. GTP is bound by residues 166–173 (GMPNAGKS), 191–195 (FTTLV), 213–216 (DIPG), 283–286 (NKID), and 314–316 (SAA). Mg(2+)-binding residues include Ser173 and Thr193. Over residues 364-384 (MEAEAEEEWDDDWDEDDDEGV) the composition is skewed to acidic residues. The interval 364–390 (MEAEAEEEWDDDWDEDDDEGVEIVYQR) is disordered.

The protein belongs to the TRAFAC class OBG-HflX-like GTPase superfamily. OBG GTPase family. In terms of assembly, monomer. Requires Mg(2+) as cofactor.

It localises to the cytoplasm. An essential GTPase which binds GTP, GDP and possibly (p)ppGpp with moderate affinity, with high nucleotide exchange rates and a fairly low GTP hydrolysis rate. Plays a role in control of the cell cycle, stress response, ribosome biogenesis and in those bacteria that undergo differentiation, in morphogenesis control. The sequence is that of GTPase Obg from Cronobacter sakazakii (strain ATCC BAA-894) (Enterobacter sakazakii).